The following is a 366-amino-acid chain: tRNA/tmRNA (uracil-C(5))-methyltransferase (366 aa).

Residues Gln-188, Tyr-216, Asn-221, Glu-237, and Asp-297 each contribute to the S-adenosyl-L-methionine site. Cys-322 functions as the Nucleophile in the catalytic mechanism. Catalysis depends on Glu-356, which acts as the Proton acceptor.

Belongs to the class I-like SAM-binding methyltransferase superfamily. RNA M5U methyltransferase family. TrmA subfamily.

The catalysed reaction is uridine(54) in tRNA + S-adenosyl-L-methionine = 5-methyluridine(54) in tRNA + S-adenosyl-L-homocysteine + H(+). The enzyme catalyses uridine(341) in tmRNA + S-adenosyl-L-methionine = 5-methyluridine(341) in tmRNA + S-adenosyl-L-homocysteine + H(+). Its function is as follows. Dual-specificity methyltransferase that catalyzes the formation of 5-methyluridine at position 54 (m5U54) in all tRNAs, and that of position 341 (m5U341) in tmRNA (transfer-mRNA). The chain is tRNA/tmRNA (uracil-C(5))-methyltransferase from Histophilus somni (strain 129Pt) (Haemophilus somnus).